The sequence spans 113 residues: Hydrogenase maturation factor HypA 1 (113 aa).

H2 lines the Ni(2+) pocket. C73, C76, C89, and C92 together coordinate Zn(2+).

This sequence belongs to the HypA/HybF family.

In terms of biological role, involved in the maturation of [NiFe] hydrogenases. Required for nickel insertion into the metal center of the hydrogenase. This chain is Hydrogenase maturation factor HypA 1, found in Bradyrhizobium diazoefficiens (strain JCM 10833 / BCRC 13528 / IAM 13628 / NBRC 14792 / USDA 110).